A 100-amino-acid polypeptide reads, in one-letter code: Small ribosomal subunit protein uS14c (100 aa).

Belongs to the universal ribosomal protein uS14 family. In terms of assembly, part of the 30S ribosomal subunit.

It is found in the plastid. The protein localises to the chloroplast. In terms of biological role, binds 16S rRNA, required for the assembly of 30S particles. This Nasturtium officinale (Watercress) protein is Small ribosomal subunit protein uS14c.